The following is a 456-amino-acid chain: Asparagine--tRNA ligase (456 aa).

It belongs to the class-II aminoacyl-tRNA synthetase family. In terms of assembly, homodimer.

Its subcellular location is the cytoplasm. It catalyses the reaction tRNA(Asn) + L-asparagine + ATP = L-asparaginyl-tRNA(Asn) + AMP + diphosphate + H(+). The chain is Asparagine--tRNA ligase from Mycoplasmoides gallisepticum (strain R(low / passage 15 / clone 2)) (Mycoplasma gallisepticum).